Reading from the N-terminus, the 232-residue chain is Exosome complex component RRP40 (232 aa).

The protein belongs to the RRP40 family. As to quaternary structure, component of the RNA exosome complex. Specifically part of the catalytically inactive RNA exosome core complex.

The protein localises to the cytoplasm. It localises to the nucleus. The protein resides in the nucleolus. Functionally, non-catalytic component of the RNA exosome complex which has 3'-&gt;5' exoribonuclease activity and participates in a multitude of cellular RNA processing and degradation events. In the nucleus, the RNA exosome complex is involved in proper maturation of stable RNA species such as rRNA, snRNA and snoRNA, in the elimination of RNA processing by-products and non-coding 'pervasive' transcripts such as antisense RNA species, and of mRNAs with processing defects, thereby limiting or excluding their export to the cytoplasm. In the cytoplasm, the RNA exosome complex is involved in general mRNA turnover and specifically degrades inherently unstable mRNAs containing AU-rich elements (AREs) within their 3' untranslated regions, and in RNA surveillance pathways, preventing translation of aberrant mRNAs. The catalytic inactive RNA exosome core complex of 9 subunits is proposed to play a pivotal role in the binding and presentation of RNA for ribonucleolysis, and to serve as a scaffold for the association with catalytic subunits and accessory proteins or complexes. Required generally for normal embryonic and neuronal development. Also plays a critical role in the maintenance of neuronal function in mature flies by controlling the levels of specific mRNAs such as the synaptic regulator Arc1. The protein is Exosome complex component RRP40 of Drosophila melanogaster (Fruit fly).